The chain runs to 495 residues: Heterogeneous nuclear ribonucleoprotein Q (495 aa).

Residues 1–10 (MSDARDNDDR) show a composition bias toward basic and acidic residues. The interval 1–101 (MSDARDNDDR…KPPSPIDDED (101 aa)) is disordered. Composition is skewed to acidic residues over residues 11 to 46 (VDFEEGSYSEMEDEVEEEQVEEYEEEEEEDDDDDDV) and 67 to 101 (MEDVQEEIAEDDDNHIDIETADDDEKPPSPIDDED). RRM domains follow at residues 116–194 (SEVF…LSET), 196–278 (NRLF…WADP), and 292–368 (KALY…LAKP). The tract at residues 452 to 495 (MPMAAAPPQRPRRNDRNNGSSGGSGRDNSHEHDGNRGGRRYRPY) is disordered. Residues 478–487 (DNSHEHDGNR) show a composition bias toward basic and acidic residues.

In terms of assembly, interacts with LHP1 in the nucleus on a common set of chromatin regions. Predominantly expressed in vascular and meristematic tissues. Expressed throughout development in seedlings, roots, leaves, floral buds and siliques.

It localises to the nucleus. Its subcellular location is the cytoplasm. The protein resides in the microsome. Its function is as follows. Transcriptional activator that binds DNA on GAGA-like motif and 5'-(C/G)ACGTG(G/T)C(A/G)-3' consensus motif in the promoters of target genes. Component of ribonucleosomes, which are complexes of at least 20 other different heterogeneous nuclear ribonucleoproteins (hnRNP). hnRNP play an important role in processing of precursor mRNA in the nucleus. Required during flower development and for cell fate determination. Acts both as an antagonist and as a promoter of polycomb LHP1 gene regulation activity, depending of target genes, to regulate the transcription of stress-responsive and flowering genes. May regulate histone H3 trimethylation on lysine 27 (H3K27me3). Recognizes and binds histone H3 tails methylated at 'Lys-4' (H3K4me) and acetylated at 'Lys-9' (H3K9ac), leading to epigenetic activation. When in complex with LHP1, recognizes and binds histone H3 tails methylated at 'Lys-4' (H3K4me) and 'Lys-27' (H3K27me), mostly corresponding to stress-responsive genes. May function as a suppressor of cell-autonomous immune responses involving glucosinolates, salicylic acid (SA) and jasmonic acid (JA) pathways toward pathogenic bacteria and fungi. The sequence is that of Heterogeneous nuclear ribonucleoprotein Q from Arabidopsis thaliana (Mouse-ear cress).